The chain runs to 531 residues: Poly(A)-specific ribonuclease PNLDC1 (531 aa).

Residues Asp-28, Glu-30, Asp-271, and Asp-365 each contribute to the Mg(2+) site. A helical membrane pass occupies residues 506 to 526; the sequence is ITCLLQVCSIVTTWAMIAFLL.

It belongs to the CAF1 family. Requires Mg(2+) as cofactor. Specifically expressed in embryonic stem cells. Highly expressed in testis.

The protein resides in the endoplasmic reticulum membrane. It catalyses the reaction Exonucleolytic cleavage of poly(A) to 5'-AMP.. Functionally, 3'-exoribonuclease that has a preference for poly(A) tails of mRNAs, thereby efficiently degrading poly(A) tails. Exonucleolytic degradation of the poly(A) tail is often the first step in the decay of eukaryotic mRNAs and is also used to silence certain maternal mRNAs translationally during oocyte maturation and early embryonic development. May act as a regulator of multipotency in embryonic stem cells. Is a critical factor for proper spermatogenesis, involved in pre-piRNAs processing to generate mature piRNAs. The polypeptide is Poly(A)-specific ribonuclease PNLDC1 (Mus musculus (Mouse)).